The sequence spans 500 residues: Cytochrome P450 2D4 (500 aa).

A heme-binding site is contributed by Cys-446.

Belongs to the cytochrome P450 family. Heme serves as cofactor. Brain.

It localises to the endoplasmic reticulum membrane. The protein resides in the microsome membrane. The catalysed reaction is an organic molecule + reduced [NADPH--hemoprotein reductase] + O2 = an alcohol + oxidized [NADPH--hemoprotein reductase] + H2O + H(+). Cytochromes P450 are a group of heme-thiolate monooxygenases. In liver microsomes, this enzyme is involved in an NADPH-dependent electron transport pathway. It oxidizes a variety of structurally unrelated compounds, including steroids, fatty acids, and xenobiotics. This is Cytochrome P450 2D4 (Cyp2d4) from Rattus norvegicus (Rat).